The following is a 377-amino-acid chain: Putative FBD-associated F-box protein At5g44940 (377 aa).

Residues 4–50 form the F-box domain; that stretch reads FDYISEFPDCLLTQILLNLPTKDSVKTSVLSKRWRNLWLNVPGLRLR. Residues 297–346 enclose the FBD domain; that stretch reads IDFHKVPQCLISTLEYVQIEELILKEKSGIKLVDYFLENSAVLKKLTLSF.

This chain is Putative FBD-associated F-box protein At5g44940, found in Arabidopsis thaliana (Mouse-ear cress).